A 229-amino-acid chain; its full sequence is Deoxyribose-phosphate aldolase (229 aa).

The active-site Proton donor/acceptor is the aspartate 84. Lysine 146 serves as the catalytic Schiff-base intermediate with acetaldehyde. Catalysis depends on lysine 188, which acts as the Proton donor/acceptor.

This sequence belongs to the DeoC/FbaB aldolase family. DeoC type 1 subfamily.

Its subcellular location is the cytoplasm. The enzyme catalyses 2-deoxy-D-ribose 5-phosphate = D-glyceraldehyde 3-phosphate + acetaldehyde. Its pathway is carbohydrate degradation; 2-deoxy-D-ribose 1-phosphate degradation; D-glyceraldehyde 3-phosphate and acetaldehyde from 2-deoxy-alpha-D-ribose 1-phosphate: step 2/2. In terms of biological role, catalyzes a reversible aldol reaction between acetaldehyde and D-glyceraldehyde 3-phosphate to generate 2-deoxy-D-ribose 5-phosphate. This Pyrobaculum neutrophilum (strain DSM 2338 / JCM 9278 / NBRC 100436 / V24Sta) (Thermoproteus neutrophilus) protein is Deoxyribose-phosphate aldolase.